The chain runs to 335 residues: uncharacterized protein (335 aa).

3 disordered regions span residues 153 to 174 (LNDKEDEEKLDQTTESEESDRI), 218 to 239 (HTSVRRSMSSVSSSASSTQEEV), and 254 to 295 (RCKV…PVTS). The span at 156-170 (KEDEEKLDQTTESEE) shows a compositional bias: acidic residues. 2 stretches are compositionally biased toward low complexity: residues 222-234 (RRSMSSVSSSASS) and 275-295 (THTSVSSLSVHSVSPTPPVTS).

This is an uncharacterized protein from Caenorhabditis elegans.